The primary structure comprises 593 residues: Aspartate--tRNA(Asp/Asn) ligase (593 aa).

Glu172 contacts L-aspartate. Residues 196–199 (QLFK) are aspartate. Residue Arg218 participates in L-aspartate binding. ATP is bound by residues 218–220 (RDE) and Gln227. His450 is an L-aspartate binding site. An ATP-binding site is contributed by Glu484. Arg491 contributes to the L-aspartate binding site. Residue 536 to 539 (GLDR) coordinates ATP.

The protein belongs to the class-II aminoacyl-tRNA synthetase family. Type 1 subfamily. As to quaternary structure, homodimer.

It is found in the cytoplasm. It carries out the reaction tRNA(Asx) + L-aspartate + ATP = L-aspartyl-tRNA(Asx) + AMP + diphosphate. In terms of biological role, aspartyl-tRNA synthetase with relaxed tRNA specificity since it is able to aspartylate not only its cognate tRNA(Asp) but also tRNA(Asn). Reaction proceeds in two steps: L-aspartate is first activated by ATP to form Asp-AMP and then transferred to the acceptor end of tRNA(Asp/Asn). The sequence is that of Aspartate--tRNA(Asp/Asn) ligase from Nitrosomonas europaea (strain ATCC 19718 / CIP 103999 / KCTC 2705 / NBRC 14298).